Consider the following 202-residue polypeptide: Kunitz trypsin inhibitor 7 (202 aa).

Residues 1-25 form the signal peptide; that stretch reads MKTFRSMLISLLLVAITTTSGVVEG. An intrachain disulfide couples Cys69 to Cys115. N-linked (GlcNAc...) asparagine glycans are attached at residues Asn93, Asn136, Asn144, and Asn198.

Belongs to the protease inhibitor I3 (leguminous Kunitz-type inhibitor) family.

Exhibits Kunitz trypsin protease inhibitor activity. The polypeptide is Kunitz trypsin inhibitor 7 (Arabidopsis thaliana (Mouse-ear cress)).